Reading from the N-terminus, the 424-residue chain is Vasopressin V1a receptor (424 aa).

The disordered stretch occupies residues 1–40 (MSFPRGSQDRSVGNSSPWWPLTTEGSNGSQEAARLGEGDS). Over 1–52 (MSFPRGSQDRSVGNSSPWWPLTTEGSNGSQEAARLGEGDSPLGDVRNEELAK) the chain is Extracellular. The segment covering 9–30 (DRSVGNSSPWWPLTTEGSNGSQ) has biased composition (polar residues). N27 carries an N-linked (GlcNAc...) asparagine glycan. Residues 53 to 76 (LEIAVLAVIFVVAVLGNSSVLLAL) traverse the membrane as a helical segment. The Cytoplasmic segment spans residues 77–88 (HRTPRKTSRMHL). The helical transmembrane segment at 89 to 110 (FIRHLSLADLAVAFFQVLPQLC) threads the bilayer. Residues 111 to 125 (WDITYRFRGPDWLCR) are Extracellular-facing. C124 and C205 are disulfide-bonded. The chain crosses the membrane as a helical span at residues 126 to 147 (VVKHLQVFAMFASAYMLVVMTA). Residues 148–168 (DRYIAVCHPLKTLQQPARRSR) lie on the Cytoplasmic side of the membrane. The helical transmembrane segment at 169 to 190 (LMIATSWVLSFILSTPQYFIFS) threads the bilayer. Topologically, residues 191–220 (VIEIEVNNGTKTQDCWATFIQPWGTRAYVT) are extracellular. The chain crosses the membrane as a helical span at residues 221–241 (WMTSGVFVAPVVVLGTCYGFI). Topologically, residues 242 to 299 (CYHIWRNIRGKTASSRHSKGDKGSGEAVGPFHKGLLVTPCVSSVKSISRAKIRTVKMT) are cytoplasmic. The chain crosses the membrane as a helical span at residues 300–319 (FVIVSAYILCWAPFFIVQMW). Over 320-337 (SVWDENFIWTDSENPSIT) the chain is Extracellular. A helical transmembrane segment spans residues 338 to 357 (ITALLASLNSCCNPWIYMFF). The Cytoplasmic segment spans residues 358-424 (SGHLLQDCVQ…KSIRFIPVST (67 aa)). Residues C371 and C372 are each lipidated (S-palmitoyl cysteine). Residues 383-416 (DSDSMSRRQTSYSNNRSPTNSTGMWKDSPKSSKS) form a disordered region. Residues 389 to 405 (RRQTSYSNNRSPTNSTG) are compositionally biased toward polar residues. Position 410 is a phosphoserine (S410).

The protein belongs to the G-protein coupled receptor 1 family. Vasopressin/oxytocin receptor subfamily. Post-translationally, palmitoylated on three cysteine residues, of which only two are identified. Localized within gonadotropes of the anterior pituitary of the brain. Broadly distributed throughout the cerebral cortex.

It localises to the cell membrane. Its subcellular location is the cytoplasmic vesicle membrane. In terms of biological role, receptor for arginine vasopressin. The activity of this receptor is mediated by G proteins which activate a phosphatidyl-inositol-calcium second messenger system. Involved in social memory formation. The polypeptide is Vasopressin V1a receptor (Avpr1a) (Rattus norvegicus (Rat)).